We begin with the raw amino-acid sequence, 212 residues long: NAD(P)H-quinone oxidoreductase subunit K, chloroplastic (212 aa).

Residues Cys-43, Cys-44, Cys-108, and Cys-139 each contribute to the [4Fe-4S] cluster site.

This sequence belongs to the complex I 20 kDa subunit family. NDH is composed of at least 16 different subunits, 5 of which are encoded in the nucleus. [4Fe-4S] cluster serves as cofactor.

It is found in the plastid. The protein resides in the chloroplast thylakoid membrane. The enzyme catalyses a plastoquinone + NADH + (n+1) H(+)(in) = a plastoquinol + NAD(+) + n H(+)(out). It carries out the reaction a plastoquinone + NADPH + (n+1) H(+)(in) = a plastoquinol + NADP(+) + n H(+)(out). Its function is as follows. NDH shuttles electrons from NAD(P)H:plastoquinone, via FMN and iron-sulfur (Fe-S) centers, to quinones in the photosynthetic chain and possibly in a chloroplast respiratory chain. The immediate electron acceptor for the enzyme in this species is believed to be plastoquinone. Couples the redox reaction to proton translocation, and thus conserves the redox energy in a proton gradient. This is NAD(P)H-quinone oxidoreductase subunit K, chloroplastic from Phaseolus vulgaris (Kidney bean).